A 699-amino-acid chain; its full sequence is Elongation factor G (699 aa).

In terms of domain architecture, tr-type G spans Glu-8–Leu-288. GTP is bound by residues Ala-17 to Thr-24, Asp-86 to His-90, and Asn-140 to Asp-143.

It belongs to the TRAFAC class translation factor GTPase superfamily. Classic translation factor GTPase family. EF-G/EF-2 subfamily.

The protein resides in the cytoplasm. Its function is as follows. Catalyzes the GTP-dependent ribosomal translocation step during translation elongation. During this step, the ribosome changes from the pre-translocational (PRE) to the post-translocational (POST) state as the newly formed A-site-bound peptidyl-tRNA and P-site-bound deacylated tRNA move to the P and E sites, respectively. Catalyzes the coordinated movement of the two tRNA molecules, the mRNA and conformational changes in the ribosome. The polypeptide is Elongation factor G (Agrobacterium fabrum (strain C58 / ATCC 33970) (Agrobacterium tumefaciens (strain C58))).